The following is a 460-amino-acid chain: MPINAITSDHVIINGANKPATIVYSTESGTILDVLEGSVVMEKTEITKYEIHTLENVSPCTILPGLVDSHVHLNEPGRTSWEGFETGTQAAISGGVTTVVDMPLNAIPPTTNVENFRIKLEAAEGQMWCDVGFWGGLVPHNLPDLIPLVKAGVRGFKGFLLDSGVEEFPPIGKEYIEEALKVLAEEDTMMMFHAELPKAHEDQQQPEQSHREYSSFLSSRPDSFEIDAINLILECLRARNGPVPPVHIVHLASMKAIPLIRKARASGLPVTTETCFHYLCIAAEQIPDGATYFKCCPPIRSESNRQGLWDALREGVIGSVVSDHSPCTPELKNLQKGDFFDSWGGIASVGLGLPLMFTQGCSLVDIVTWCCKNTSHQVGLSHQKGTIAPGYDADLVVFDTASKHKISNSSVYFKNKLTAYNGMTVKGTVLKTILRGQVVYTNANGVSKTPLGQTLLDSRR.

6 residues coordinate Zn(2+): His-70, His-72, Lys-157, His-193, His-250, and Asp-323. An N6-carboxylysine modification is found at Lys-157.

This sequence belongs to the metallo-dependent hydrolases superfamily. Allantoinase family. As to quaternary structure, homotetramer. The cofactor is Zn(2+). Post-translationally, carboxylation allows a single lysine to coordinate two zinc ions.

It carries out the reaction (S)-allantoin + H2O = allantoate + H(+). It functions in the pathway nitrogen metabolism; (S)-allantoin degradation; allantoate from (S)-allantoin: step 1/1. Functionally, catalyzes the conversion of allantoin (5-ureidohydantoin) to allantoic acid by hydrolytic cleavage of the five-member hydantoin ring. Involved in the utilization of purines as secondary nitrogen sources, when primary sources are limiting. In Saccharomyces cerevisiae (strain ATCC 204508 / S288c) (Baker's yeast), this protein is Allantoinase (DAL1).